A 234-amino-acid polypeptide reads, in one-letter code: CHD1 helical C-terminal domain containing protein 1 (234 aa).

The tract at residues 1 to 38 (MEASDGQADEREEPLEQGTNARSLERRSSTTPAKDSLV) is disordered. The tract at residues 44–145 (LDRDTFKICK…NNQTTKFLMA (102 aa)) is CHD1 helical C-terminal domain (CHCT). Residues 200–234 (LRARGPRRRGSKLPQEPKLKRRRIKEAPDTPETCL) form a disordered region.

The protein resides in the cytoplasm. It is found in the nucleus. May play a role in regulation of apoptosis. The protein is CHD1 helical C-terminal domain containing protein 1 (CHCT1) of Bos taurus (Bovine).